We begin with the raw amino-acid sequence, 157 residues long: 17.8 kDa class I heat shock protein (157 aa).

Residues E43 to G157 form the sHSP domain.

The protein belongs to the small heat shock protein (HSP20) family. As to quaternary structure, forms oligomeric structures.

It is found in the cytoplasm. The protein is 17.8 kDa class I heat shock protein of Daucus carota (Wild carrot).